The following is a 352-amino-acid chain: C-X-C chemokine receptor type 4 (352 aa).

The important for chemokine binding and signaling stretch occupies residues 1–21; that stretch reads MEGISIYTSDNYTEEMGSGDY. Topologically, residues 1-38 are extracellular; the sequence is MEGISIYTSDNYTEEMGSGDYDSMKEPCFREENANFNK. Tyr7 bears the Sulfotyrosine mark. Asn11 is a glycosylation site (N-linked (GlcNAc...) asparagine). At Tyr12 the chain carries Sulfotyrosine. Ser18 carries O-linked (Xyl...) (chondroitin sulfate) serine glycosylation. Tyr21 bears the Sulfotyrosine mark. Intrachain disulfides connect Cys28–Cys274 and Cys109–Cys186. Residues 39–63 traverse the membrane as a helical segment; the sequence is IFLPTIYSIIFLTGIVGNGLVILVM. Over 64–77 the chain is Cytoplasmic; the sequence is GYQKKLRSMTDKYR. A helical transmembrane segment spans residues 78–99; sequence LHLSVADLLFVITLPFWAVDAV. The interval 94–97 is chemokine binding; that stretch reads WAVD. Residues 100-110 lie on the Extracellular side of the membrane; it reads ANWYFGNFLCK. A helical transmembrane segment spans residues 111–130; that stretch reads AVHVIYTVNLYSSVLILAFI. Positions 113-117 are chemokine binding; sequence HVIYT. At 131-154 the chain is on the cytoplasmic side; it reads SLDRYLAIVHATNSQRPRKLLAEK. The Important for signaling signature appears at 133–135; sequence DRY. Residues 135–147 are involved in dimerization; when bound to chemokine; sequence YLAIVHATNSQRP. A helical transmembrane segment spans residues 155-174; the sequence is VVYVGVWIPALLLTIPDFIF. At 175-195 the chain is on the extracellular side; the sequence is ANVSEADDRYICDRFYPNDLW. Residues 186 to 190 are chemokine binding, important for signaling; it reads CDRFY. An involved in dimerization region spans residues 191 to 210; it reads PNDLWVVVFQFQHIMVGLIL. A helical transmembrane segment spans residues 196-216; sequence VVVFQFQHIMVGLILPGIVIL. Over 217 to 241 the chain is Cytoplasmic; the sequence is SCYCIIISKLSHSKGHQKRKALKTT. A helical membrane pass occupies residues 242-261; that stretch reads VILILAFFACWLPYYIGISI. Over 262 to 282 the chain is Extracellular; that stretch reads DSFILLEIIKQGCEFENTVHK. Positions 266-268 are involved in dimerization; that stretch reads LLE. A helical transmembrane segment spans residues 283–302; the sequence is WISITEALAFFHCCLNPILY. Residues 303-352 are Cytoplasmic-facing; it reads AFLGAKFKTSAQHALTSVSRGSSLKILSKGKRGGHSSVSTESESSSFHSS. Ser319 and Ser321 each carry phosphoserine. 2 positions are modified to phosphoserine; by PKC and GRK6: Ser324 and Ser325. The interval 329–352 is disordered; the sequence is LSKGKRGGHSSVSTESESSSFHSS. The residue at position 330 (Ser330) is a Phosphoserine; by GRK6. A Glycyl lysine isopeptide (Lys-Gly) (interchain with G-Cter in ubiquitin) cross-link involves residue Lys331. Residues 337 to 352 show a composition bias toward low complexity; sequence HSSVSTESESSSFHSS. Ser339 carries the post-translational modification Phosphoserine; by GRK6. 2 positions are modified to phosphoserine: Ser348 and Ser351.

The protein belongs to the G-protein coupled receptor 1 family. As to quaternary structure, monomer. Can form homodimers. Interacts with CD164. Interacts with ARRB2; the interaction is dependent on the C-terminal phosphorylation of CXCR4 and allows activation of MAPK1 and MAPK3. Interacts with ARR3; the interaction is dependent on the C-terminal phosphorylation of CXCR4 and modulates calcium mobilization. Interacts with RNF113A; the interaction, enhanced by CXCL12, promotes CXCR4 ubiquitination and subsequent degradation. Interacts (via the cytoplasmic C-terminal) with ITCH (via the WW domains I and II); the interaction, enhanced by CXCL12, promotes CXCR4 ubiquitination and leads to its degradation. Interacts with extracellular ubiquitin. Interacts with DBN1; this interaction is enhanced by antigenic stimulation. Following LPS binding, may form a complex with GDF5, HSP90AA1 and HSPA8. In terms of processing, phosphorylated on agonist stimulation. Rapidly phosphorylated on serine and threonine residues in the C-terminal. Phosphorylation at Ser-324 and Ser-325 leads to recruitment of ITCH, ubiquitination and protein degradation. Ubiquitinated after ligand binding, leading to its degradation. Ubiquitinated by ITCH at the cell membrane on agonist stimulation. The ubiquitin-dependent mechanism, endosomal sorting complex required for transport (ESCRT), then targets CXCR4 for lysosomal degradation. This process is dependent also on prior Ser-/Thr-phosphorylation in the C-terminal of CXCR4. Also binding of ARRB1 to STAM negatively regulates CXCR4 sorting to lysosomes though modulating ubiquitination of SFR5S. Post-translationally, sulfation is required for efficient binding of CXCL12/SDF-1alpha and promotes its dimerization. In terms of processing, O- and N-glycosylated. N-glycosylation can mask coreceptor function. The O-glycosylation chondroitin sulfate attachment does not affect interaction with CXCL12/SDF-1alpha nor its coreceptor activity.

It localises to the cell membrane. The protein localises to the cell junction. The protein resides in the early endosome. Its subcellular location is the late endosome. It is found in the lysosome. Functionally, receptor for the C-X-C chemokine CXCL12/SDF-1 that transduces a signal by increasing intracellular calcium ion levels and enhancing MAPK1/MAPK3 activation. Involved in the AKT signaling cascade. Plays a role in regulation of cell migration, e.g. during wound healing. Acts as a receptor for extracellular ubiquitin; leading to enhanced intracellular calcium ions and reduced cellular cAMP levels. Binds bacterial lipopolysaccharide (LPS) et mediates LPS-induced inflammatory response, including TNF secretion by monocytes. Involved in hematopoiesis and in cardiac ventricular septum formation. Also plays an essential role in vascularization of the gastrointestinal tract, probably by regulating vascular branching and/or remodeling processes in endothelial cells. Involved in cerebellar development. In the CNS, could mediate hippocampal-neuron survival. The polypeptide is C-X-C chemokine receptor type 4 (CXCR4) (Pan troglodytes (Chimpanzee)).